Here is a 354-residue protein sequence, read N- to C-terminus: UDP-N-acetylglucosamine--N-acetylmuramyl-(pentapeptide) pyrophosphoryl-undecaprenol N-acetylglucosamine transferase (354 aa).

Residues 11–13 (TAG), R164, S194, and Q289 each bind UDP-N-acetyl-alpha-D-glucosamine.

The protein belongs to the glycosyltransferase 28 family. MurG subfamily.

The protein localises to the cell membrane. It catalyses the reaction di-trans,octa-cis-undecaprenyl diphospho-N-acetyl-alpha-D-muramoyl-L-alanyl-D-glutamyl-meso-2,6-diaminopimeloyl-D-alanyl-D-alanine + UDP-N-acetyl-alpha-D-glucosamine = di-trans,octa-cis-undecaprenyl diphospho-[N-acetyl-alpha-D-glucosaminyl-(1-&gt;4)]-N-acetyl-alpha-D-muramoyl-L-alanyl-D-glutamyl-meso-2,6-diaminopimeloyl-D-alanyl-D-alanine + UDP + H(+). It participates in cell wall biogenesis; peptidoglycan biosynthesis. In terms of biological role, cell wall formation. Catalyzes the transfer of a GlcNAc subunit on undecaprenyl-pyrophosphoryl-MurNAc-pentapeptide (lipid intermediate I) to form undecaprenyl-pyrophosphoryl-MurNAc-(pentapeptide)GlcNAc (lipid intermediate II). In Clostridium botulinum (strain 657 / Type Ba4), this protein is UDP-N-acetylglucosamine--N-acetylmuramyl-(pentapeptide) pyrophosphoryl-undecaprenol N-acetylglucosamine transferase.